Here is a 289-residue protein sequence, read N- to C-terminus: UPF0761 membrane protein ESA_04062 (289 aa).

6 helical membrane passes run 44 to 64 (LLSLVPFVAVIFALFAAFPMF), 104 to 124 (VGALGLIVTSLLLMYAIDSAL), 140 to 160 (FAVYWMILTLGPLLAGASLVI), 183 to 203 (IFPLLLSWLSFWLLYSVVPTT), 215 to 235 (LVAALLFELGKKGFALYITMF), and 244 to 264 (VLAVIPILFLWVYWTWCIVLL).

This sequence belongs to the UPF0761 family.

The protein localises to the cell inner membrane. This Cronobacter sakazakii (strain ATCC BAA-894) (Enterobacter sakazakii) protein is UPF0761 membrane protein ESA_04062.